Reading from the N-terminus, the 96-residue chain is SPbeta prophage-derived uncharacterized protein YosV (96 aa).

This Bacillus subtilis (strain 168) protein is SPbeta prophage-derived uncharacterized protein YosV (yosV).